The primary structure comprises 246 residues: Ribulose-phosphate 3-epimerase (246 aa).

S9 contributes to the substrate binding site. The a divalent metal cation site is built by H34, D36, and H83. Residue D36 is the Proton acceptor of the active site. Substrate contacts are provided by residues H83, 159 to 162 (GFGG), 188 to 190 (DGG), and 210 to 212 (GTS). D188 contributes to the a divalent metal cation binding site. The active-site Proton donor is D188.

This sequence belongs to the ribulose-phosphate 3-epimerase family. It depends on Co(2+) as a cofactor. Fe(2+) serves as cofactor. Mn(2+) is required as a cofactor. Requires Zn(2+) as cofactor.

The enzyme catalyses D-ribulose 5-phosphate = D-xylulose 5-phosphate. Its pathway is carbohydrate degradation; pentose phosphate pathway; D-xylulose 5-phosphate from D-ribulose 5-phosphate (non-oxidative stage): step 1/1. Its function is as follows. Catalyzes the reversible epimerization of D-ribulose 5-phosphate to D-xylulose 5-phosphate. This Candida glabrata (strain ATCC 2001 / BCRC 20586 / JCM 3761 / NBRC 0622 / NRRL Y-65 / CBS 138) (Yeast) protein is Ribulose-phosphate 3-epimerase (RPE1).